Consider the following 252-residue polypeptide: MQIFHNLNEWIRFRNTLSPDLSLGFAPTMGNLHAGHASLFLASSKENHYTVSSLFVNPTQFNNPDDYKHYPRTVDADLELMTQNGVDFCILPNENEIYTDGYAYQVQENRLGQLMEGKHRPGHFNGVLTIVMKLFNLVKPTRAYFGEKDYQQLLLIQGMVKALFMDIEIKSCPTVREKSGLACSSRNNRLTPSQREIADEFAKIFHQNKSSAMISKELEALGITVEYIEEFQGRRFAAVKIGDIRLIDNYLL.

29–36 lines the ATP pocket; sequence MGNLHAGH. The active-site Proton donor is the His36. Gln60 contacts (R)-pantoate. A beta-alanine-binding site is contributed by Gln60. Position 146–149 (146–149) interacts with ATP; that stretch reads GEKD. Gln152 provides a ligand contact to (R)-pantoate. ATP-binding positions include Val175 and 183 to 186; that span reads CSSR.

This sequence belongs to the pantothenate synthetase family. In terms of assembly, homodimer.

Its subcellular location is the cytoplasm. The enzyme catalyses (R)-pantoate + beta-alanine + ATP = (R)-pantothenate + AMP + diphosphate + H(+). It functions in the pathway cofactor biosynthesis; (R)-pantothenate biosynthesis; (R)-pantothenate from (R)-pantoate and beta-alanine: step 1/1. In terms of biological role, catalyzes the condensation of pantoate with beta-alanine in an ATP-dependent reaction via a pantoyl-adenylate intermediate. This is Pantothenate synthetase from Legionella pneumophila (strain Corby).